The primary structure comprises 254 residues: Persulfide dioxygenase ETHE1, mitochondrial (254 aa).

A mitochondrion-targeting transit peptide spans 1–7 (MASAVVR). A phosphoserine mark is found at Ser-14, Ser-17, and Ser-19. Lys-32 carries the N6-acetyllysine; alternate modification. At Lys-32 the chain carries N6-succinyllysine; alternate. Lys-66 bears the N6-acetyllysine mark. His-79, His-135, and Asp-154 together coordinate Fe cation. The residue at position 172 (Lys-172) is an N6-acetyllysine; alternate. Lys-172 is subject to N6-succinyllysine; alternate.

This sequence belongs to the metallo-beta-lactamase superfamily. Glyoxalase II family. In terms of assembly, homodimer. Monomer. Interacts with TST. May interact with RELA. Fe(2+) is required as a cofactor.

It localises to the cytoplasm. The protein resides in the nucleus. Its subcellular location is the mitochondrion matrix. It catalyses the reaction S-sulfanylglutathione + O2 + H2O = sulfite + glutathione + 2 H(+). Its function is as follows. First described as a protein that can shuttle between the nucleus and the cytoplasm and suppress p53-induced apoptosis by sequestering the transcription factor RELA/NFKB3 in the cytoplasm and preventing its accumulation in the nucleus. Sulfur dioxygenase that plays an essential role in hydrogen sulfide catabolism in the mitochondrial matrix. Hydrogen sulfide (H(2)S) is first oxidized by SQRDL, giving rise to cysteine persulfide residues. ETHE1 consumes molecular oxygen to catalyze the oxidation of the persulfide, once it has been transferred to a thiophilic acceptor, such as glutathione (R-SSH). Plays an important role in metabolic homeostasis in mitochondria by metabolizing hydrogen sulfide and preventing the accumulation of supraphysiological H(2)S levels that have toxic effects, due to the inhibition of cytochrome c oxidase. In Mus musculus (Mouse), this protein is Persulfide dioxygenase ETHE1, mitochondrial (Ethe1).